We begin with the raw amino-acid sequence, 436 residues long: Cyclic GMP-AMP synthase (436 aa).

112–117 (QGSFQY) serves as a coordination point for GTP. D131 and D133 together coordinate Mg(2+). Position 182 (R182) interacts with ATP. Mg(2+) is bound at residue D193. S259 provides a ligand contact to ATP. GTP contacts are provided by K287, S301, and D348. 2 disordered regions span residues 339–358 (RGVE…PSYK) and 417–436 (AQEP…MVSG). The segment covering 419-436 (EPSSASKPEKISSTMVSG) has biased composition (polar residues). Residue G436 forms a Glycyl lysine isopeptide (Gly-Lys) (interchain with K-? in acceptor proteins) linkage.

Belongs to the CD-NTase family. A01 subfamily. As to quaternary structure, monomer. Interacts with Cap2 in the presence and absence of phage T2. A Cap2 dimer is bound on either side by a DncV monomer. The cofactor is Mg(2+). In bacteria expressing capV-cdnD-cap2, this protein is conjugated to a number of other proteins (by Cap2 via this protein's C-terminal Gly residue), many of which are involved in metabolism. More conjugated protein is found in the absence of Cap3.

The enzyme catalyses GTP + ATP = 3',3'-cGAMP + 2 diphosphate. Primed for activation by Cap2 which conjugates it to cellular proteins; priming is target protein-specific (green fluorescent protein does not activate the enzyme), but which protein(s) activate is unclear. Enzymatic activity of DncV is inhibited by folate-like molecules, such as 5-methyltetrahydrofolate di-glutamate and 5-methyltetrahydrofolate, suggesting the existence of a signaling pathway that links folate-like metabolism cofactors to the regulation of cyclic dinucleotide second messenger synthesis. Lacks a regulatory loop and is constitutively activated. In terms of biological role, cyclic nucleotide synthase (second messenger synthase) of a CBASS antivirus system. CBASS (cyclic oligonucleotide-based antiphage signaling system) provides immunity against bacteriophages. The CD-NTase protein (DncV, this protein) synthesizes cyclic nucleotides in response to infection; these serve as specific second messenger signals. The signals activate a diverse range of effectors, leading to bacterial cell death and thus abortive phage infection. A type II-A(GA) CBASS system. Functionally, catalyzes the synthesis of 3',3'-cyclic GMP-AMP (cGAMP), a second messenger in cell signal transduction, from GTP and ATP in response to phage infection. Also able to produce c-di-AMP and c-di-GMP from ATP and GTP, respectively; however, cGAMP is the dominant molecule produced by DncV in vivo, contrary to the 2'3'-cGAMP produced by eukaryotes. Is required for efficient V.cholerae intestinal colonization, and down-regulates the colonization-influencing process of chemotaxis. Is not active with dATP, TTP, UTP or CTP. Its product controls the activity of cGAMP-activated phospholipase CapV, a patatin-like lipase that is a direct cGAMP receptor encoded in the dncV operon. Protects E.coli against phage infection. When the CBASS operon (capV-dncV-cap2-cap3) is introduced in E.coli MG1655 there is about 100-fold protection against phages P1 and T2. When the operon is introduced in E.coli MG1655 there is a more than 10(3) decrease in the efficiency of T2 plaque formation. Protects 100-fold against phage T5, offers no protection against T7. When the operon is introduced in E.coli MG1655 it protects against phages T2, T4, T5 and T6. Another paper shows the operon confers protection against phages P1, T2, T5 and T6 but not T4 or lambda. This chain is Cyclic GMP-AMP synthase, found in Vibrio cholerae serotype O1 (strain ATCC 39315 / El Tor Inaba N16961).